A 329-amino-acid chain; its full sequence is Transcription factor RF2b (329 aa).

Disordered stretches follow at residues 1–24 (MQEP…RSEV) and 62–97 (SSGP…DGSG). The bZIP domain maps to 132 to 195 (DPKRAKRILA…TGLSAENAEL (64 aa)). A basic motif region spans residues 134 to 155 (KRAKRILANRQSAARSKERKAR). The leucine-zipper stretch occupies residues 160 to 174 (LERKVQTLQTEATTL). The interval 260-303 (RQNGGTQLPPQFQPPRPNVPNHMLSHPNGLQDIMQQDPLGRLQG) is disordered.

The protein belongs to the bZIP family. Binds DNA as a homodimer or as a heterodimer with RF2a. The heterodimer binds stronger to DNA than the homodimer. As to expression, expressed at high levels in roots, low level in leaf sheath, but not in leaf blade. Predominantly expressed in vascular tissues.

Its subcellular location is the nucleus. Transcription factor probably involved in vascular development and shoot tissue organization. Binds to the DNA sequence 5'-CCGAGTGTGCCCCTGG-3' present in the promoter region Box II of the phloem-specific rice tungro bacilliform virus (RTBV) promoter. May regulate tissue-specific expression of the RTBV promoter and virus replication. The sequence is that of Transcription factor RF2b (RF2b) from Oryza sativa subsp. japonica (Rice).